The primary structure comprises 147 residues: Nucleoside diphosphate kinase (147 aa).

ATP contacts are provided by Lys9, Phe57, Arg85, Thr91, Arg102, and Asn112. His115 serves as the catalytic Pros-phosphohistidine intermediate.

This sequence belongs to the NDK family. In terms of assembly, homotetramer. Requires Mg(2+) as cofactor.

It localises to the cytoplasm. The enzyme catalyses a 2'-deoxyribonucleoside 5'-diphosphate + ATP = a 2'-deoxyribonucleoside 5'-triphosphate + ADP. The catalysed reaction is a ribonucleoside 5'-diphosphate + ATP = a ribonucleoside 5'-triphosphate + ADP. Major role in the synthesis of nucleoside triphosphates other than ATP. The ATP gamma phosphate is transferred to the NDP beta phosphate via a ping-pong mechanism, using a phosphorylated active-site intermediate. The polypeptide is Nucleoside diphosphate kinase (Thermosipho melanesiensis (strain DSM 12029 / CIP 104789 / BI429)).